Here is a 1331-residue protein sequence, read N- to C-terminus: MLAAPRAGCGAALLLWIVSSCLCRAWTAPSTSQKCDEPLVSGLPHGAFSSSSSISGSYSPGYAKINKRGGAGGWSPSDSDHYQWLQVDFGNRKQISAIATQGRYSSSDWVTQYRMLYSDTGRNWKPYHQDGNIWAFPGNINSDGVVRHELQHPVIARYVRVVPLDWNGEGRIGLRIEVYGCSYWADVINFDGHVVLPYRFRNKKMKTLKDVIALKFKTSESEGVILHGEGQQGDYITLELKKAKLVLSLNLGSNQLGPIYGHTSVMTGSLLDDHHWHSVIIERQGRSINLTLDRSMQHFRTNGEFDYLDLDYEITFGGIPFSGKPSSSSRKNFKGCMESINYNGINITVLARRKKLEPSNVGNLSFSCVEPYTVPVFFNATSYLEVPGRLNQDLFSVSFQFRTWNPNGLLVFSHFADNLGNVEIDLTESKVGVHINITQTKMSQIDISSGSGLNDGQWHEVRFLAKENFAILTIDGDEASAVRTNSPLQVKTGEKYFFGGFLNQMNNSSHSVLQPSFQGCMQLIQVDDQLVNLYEVAQRKPGSFANVSIDMCAIIDRCVPNHCERGGKCSQTWDSFKCTCDETGYTGATCHNSIYEPSCEAYKHLGQTSNYYWIDPDGSGPLGPLKVYCNMTEDKVWTIVSHDLQMQTTVVSYNPEKHSVIQLVYSASMDQISAITDSAEYCEQYISYFCKMSRLLNTPDGSPYTWWVGKANEKHYYWGGSGPGIQKCACGIERNCTDPKYYCNCDADYKQWRKDAGFLSYKDHLPVSQVVVGDTDRQGSEAKLSVGPLRCQGDRNYWNAASFPNPSSYLHFSTFQGETSADISFYFKTLTPWGVFLENMGKEDFIKLELKSATEVSFSFDVGNGPVEIVVRSPTPLNDDQWHRITAERNVKQASLQVDRLPQQIRKAPTEGHTRLELYSQLFVGGAGGQQGFLGCIRSLRMNGVTLDLEERAKVTSGFISGCSGHCTSYGTNCENGGKCLERYHGYSCDCSNTAYDGTFCNKDVGAFFEEGMWLRYNFQAPATNARDSSSRVENAPDQQNSHPDLAQEEIRFSFSTTKAPCILLYISSFTTDFLAVLVKPTGSLQIRYNLGGTREPYNIDTDHRNMANGQPHSVNNTRHEKTIILKLDHYPSVSYHLPSSSDTLFNSPKSLFLGKVIETGKIDQEIHKYNTPGFTGCLSRVQFNQIAPLKAALRQTNASAHVHIQGELVESNCGASPLTLSPMSSATDPWHLDHLDSASADFPYNPGQGQAIRNGVNRNSAIIGGVIAVVIFTILCTLVFLIRYMFRHKGTYHTNEAKGAESAESADAAIMNNDPNFTETIDESKKEWLI.

The N-terminal stretch at 1-27 (MLAAPRAGCGAALLLWIVSSCLCRAWT) is a signal peptide. Residues 28-1262 (APSTSQKCDE…IRNGVNRNSA (1235 aa)) lie on the Extracellular side of the membrane. The F5/8 type C domain occupies 35 to 181 (CDEPLVSGLP…IGLRIEVYGC (147 aa)). An intrachain disulfide couples Cys-35 to Cys-181. 2 consecutive Laminin G-like domains span residues 187–368 (VINF…SFSC) and 373–552 (TVPV…IDMC). Asn-289, Asn-346, Asn-363, Asn-379, Asn-436, Asn-506, Asn-507, and Asn-546 each carry an N-linked (GlcNAc...) asparagine glycan. Cysteines 336 and 368 form a disulfide. 4 disulfide bridges follow: Cys-520-Cys-552, Cys-558-Cys-569, Cys-563-Cys-578, and Cys-580-Cys-590. The region spanning 554 to 591 (IIDRCVPNHCERGGKCSQTWDSFKCTCDETGYTGATCH) is the EGF-like 1 domain. The Fibrinogen C-terminal domain maps to 592 to 798 (NSIYEPSCEA…LRCQGDRNYW (207 aa)). 2 N-linked (GlcNAc...) asparagine glycosylation sites follow: Asn-630 and Asn-735. Residues 799–963 (NAASFPNPSS…KVTSGFISGC (165 aa)) form the Laminin G-like 3 domain. Disulfide bonds link Cys-936–Cys-963, Cys-967–Cys-980, Cys-974–Cys-989, and Cys-991–Cys-1001. An EGF-like 2 domain is found at 964–1002 (SGHCTSYGTNCENGGKCLERYHGYSCDCSNTAYDGTFCN). One can recognise a Laminin G-like 4 domain in the interval 1023-1214 (ATNARDSSSR…IQGELVESNC (192 aa)). Residues Asn-1116 and Asn-1198 are each glycosylated (N-linked (GlcNAc...) asparagine). A disulfide bond links Cys-1178 and Cys-1214. A helical membrane pass occupies residues 1263-1283 (IIGGVIAVVIFTILCTLVFLI). Residues 1284 to 1331 (RYMFRHKGTYHTNEAKGAESAESADAAIMNNDPNFTETIDESKKEWLI) lie on the Cytoplasmic side of the membrane. Ser-1303 and Ser-1306 each carry phosphoserine.

This sequence belongs to the neurexin family. As to quaternary structure, interacts (via C-terminus) with KCNA2.

The protein resides in the membrane. The protein localises to the cell projection. It localises to the axon. Its subcellular location is the cell junction. It is found in the paranodal septate junction. Functionally, required for gap junction formation. Required, with CNTNAP1, for radial and longitudinal organization of myelinated axons. Plays a role in the formation of functional distinct domains critical for saltatory conduction of nerve impulses in myelinated nerve fibers. Demarcates the juxtaparanodal region of the axo-glial junction. This Pongo abelii (Sumatran orangutan) protein is Contactin-associated protein-like 2 (CNTNAP2).